We begin with the raw amino-acid sequence, 329 residues long: Vomeronasal type-1 receptor 42 (329 aa).

The Extracellular portion of the chain corresponds to 1–32 (MGDILFSSPQSMFSHTMNKNSILHTHSIIGKT). The helical transmembrane segment at 33 to 53 (FFSEIGIGISGNSFLLLVHIL) threads the bilayer. At 54-65 (KFIRGHRPRLTD) the chain is on the cytoplasmic side. Residues 66-86 (LPIGLLSLIHLLMLLVAAFIA) form a helical membrane-spanning segment. Residues 87–109 (TDIFISRRGWDDIICKFLVYLYR) lie on the Extracellular side of the membrane. An intrachain disulfide couples cysteine 101 to cysteine 188. Residues 110–130 (VLRGFSLCTTSMLSILQAIIL) traverse the membrane as a helical segment. Over 131–150 (SPRSSCLAKFKHISPHHISG) the chain is Cytoplasmic. The helical transmembrane segment at 151–171 (AILFLSVLYMLIGSQLLVSII) threads the bilayer. Topologically, residues 172–209 (ATPNLTMNDFIYVTQSCSILPLSYLMQSIYSTLLAIRE) are extracellular. N-linked (GlcNAc...) asparagine glycosylation is present at asparagine 175. Residues 210 to 230 (FFLISLMVLSNWYMVALLSMH) form a helical membrane-spanning segment. Topologically, residues 231–254 (RKQTQHLHGTNLSPKKSPEQSATQ) are cytoplasmic. A helical membrane pass occupies residues 255–275 (TILMLISFFLLMTIYDTIVSC). Residues 276-285 (SRTMFLNDPT) are Extracellular-facing. Residues 286 to 306 (SYSIELFIMHIYATVSPFVFM) traverse the membrane as a helical segment. At 307–329 (STEKHIVNFLRSLGKRVINFNLH) the chain is on the cytoplasmic side.

This sequence belongs to the G-protein coupled receptor 1 family.

The protein localises to the cell membrane. Functionally, putative pheromone receptor implicated in the regulation of social and reproductive behavior. The chain is Vomeronasal type-1 receptor 42 (Vmn1r42) from Mus musculus (Mouse).